Consider the following 152-residue polypeptide: Protein FYV5 (152 aa).

The next 5 membrane-spanning stretches (helical) occupy residues 26-46 (IISI…RICS), 56-76 (LISS…SCVL), 82-102 (VGII…VLFL), 106-126 (LIDL…TPFF), and 127-147 (FMLH…YLII).

It is found in the cell membrane. The protein localises to the secreted. The protein resides in the cell wall. Involved in maintaining an adequate ionic strength homeostasis of the cellular aqueous environment, necessary for normal growth rate. Required for survival upon exposure to K1 killer toxin and hence plays a role in cell wall glucan synthesis. Required for dithiothreitol (DTT) resistance. Involved in cell cycle progression. The chain is Protein FYV5 (FYV5) from Saccharomyces cerevisiae (strain ATCC 204508 / S288c) (Baker's yeast).